The sequence spans 110 residues: Acylphosphatase (110 aa).

In terms of domain architecture, Acylphosphatase-like spans Arg20–Pro108. Active-site residues include Arg35 and Asn53.

Belongs to the acylphosphatase family.

It carries out the reaction an acyl phosphate + H2O = a carboxylate + phosphate + H(+). This chain is Acylphosphatase (acyP), found in Pyrobaculum calidifontis (strain DSM 21063 / JCM 11548 / VA1).